A 361-amino-acid chain; its full sequence is DNA replication and repair protein RecF (361 aa).

30 to 37 (GANGSGKT) contacts ATP.

This sequence belongs to the RecF family.

The protein localises to the cytoplasm. Its function is as follows. The RecF protein is involved in DNA metabolism; it is required for DNA replication and normal SOS inducibility. RecF binds preferentially to single-stranded, linear DNA. It also seems to bind ATP. The chain is DNA replication and repair protein RecF from Pectobacterium atrosepticum (strain SCRI 1043 / ATCC BAA-672) (Erwinia carotovora subsp. atroseptica).